Here is a 44-residue protein sequence, read N- to C-terminus: Photosystem I reaction center subunit IX (44 aa).

A helical membrane pass occupies residues 9-29; that stretch reads FMRSAPIVAAIWISLTAGIII.

It belongs to the PsaJ family.

It is found in the cellular thylakoid membrane. May help in the organization of the PsaE and PsaF subunits. The protein is Photosystem I reaction center subunit IX of Prochlorococcus marinus (strain MIT 9515).